The chain runs to 397 residues: MIQHIRKFLQLESASGILLLTFAMFAMLFANTPLKDLYFDFLSMPVSIQIGLFSIYKPLLMWVNDGFMAVFFVLIGLEVKREMMVGAISNYQRAIFPAIGALGGMIVPALVFTLINNDSPEFQQGWAIPMATDIAFALGVLGLLGKRVPFALKIFLLALAIIDDLGAIVVIAIFFSHELSTTALISAAIAIAVLIIMNRMRVTAICAYMVVGLILWASVLKSGVHATLAGVIIGFCVPLKGKNGEEPLAHFEHLLAPWCSFVILPLFAFSNAGVSLAGMSLSTLFSPLTMGVALGLLVGKTLGVFSFSFLAVKLGIAQLSEGINFKQIFAVSVLCGIGFTMSMFLAGLAFGGDEADGQFISLARLGILIGSGISAVLGYYLLKLCTMPNIHINNLSK.

The next 12 helical transmembrane spans lie at 14 to 34 (ASGILLLTFAMFAMLFANTPL), 36 to 56 (DLYFDFLSMPVSIQIGLFSIY), 59 to 79 (LLMWVNDGFMAVFFVLIGLEV), 95 to 115 (IFPAIGALGGMIVPALVFTLI), 125 to 145 (GWAIPMATDIAFALGVLGLLG), 154 to 174 (IFLLALAIIDDLGAIVVIAIF), 177 to 197 (HELSTTALISAAIAIAVLIIM), 204 to 224 (AICAYMVVGLILWASVLKSGV), 254 to 274 (LLAPWCSFVILPLFAFSNAGV), 292 to 312 (VALGLLVGKTLGVFSFSFLAV), 328 to 348 (IFAVSVLCGIGFTMSMFLAGL), and 365 to 385 (LGILIGSGISAVLGYYLLKLC).

It belongs to the NhaA Na(+)/H(+) (TC 2.A.33) antiporter family.

Its subcellular location is the cell inner membrane. The catalysed reaction is Na(+)(in) + 2 H(+)(out) = Na(+)(out) + 2 H(+)(in). Its function is as follows. Na(+)/H(+) antiporter that extrudes sodium in exchange for external protons. The chain is Na(+)/H(+) antiporter NhaA from Glaesserella parasuis serovar 5 (strain SH0165) (Haemophilus parasuis).